Reading from the N-terminus, the 419-residue chain is 3-isopropylmalate dehydratase large subunit (419 aa).

Residues Cys-300, Cys-360, and Cys-363 each coordinate [4Fe-4S] cluster.

Belongs to the aconitase/IPM isomerase family. LeuC type 2 subfamily. In terms of assembly, heterodimer of LeuC and LeuD. Requires [4Fe-4S] cluster as cofactor.

The enzyme catalyses (2R,3S)-3-isopropylmalate = (2S)-2-isopropylmalate. It functions in the pathway amino-acid biosynthesis; L-leucine biosynthesis; L-leucine from 3-methyl-2-oxobutanoate: step 2/4. Its function is as follows. Catalyzes the isomerization between 2-isopropylmalate and 3-isopropylmalate, via the formation of 2-isopropylmaleate. The sequence is that of 3-isopropylmalate dehydratase large subunit from Desulfatibacillum aliphaticivorans.